The primary structure comprises 391 residues: Transforming growth factor beta-1 proprotein (391 aa).

Residues 1–18 form the signal peptide; sequence MDPSPLLALLLLLGAARA. The segment at 19 to 63 is straightjacket domain; it reads LSTCQRLDLEAAKKKRIEAVRGQILSKLRLTAPPPASETPPRPLP. The tract at residues 64–270 is arm domain; it reads DDVRALYNST…ALPAERANEL (207 aa). N71, N126, and N171 each carry an N-linked (GlcNAc...) asparagine glycan. Residues 221–249 form a bowtie tail region; it reads EMGPGHADEMRISIEGFEQQRGDMQSIAK. The Cell attachment site signature appears at 241 to 243; sequence RGD. Cystine bridges form between C284–C295, C294–C357, C323–C388, and C327–C390.

This sequence belongs to the TGF-beta family. As to quaternary structure, latency-associated peptide: Homodimer; disulfide-linked. Latency-associated peptide: Interacts with Transforming growth factor beta-1 (TGF-beta-1) chain; interaction is non-covalent and maintains (TGF-beta-1) in a latent state; each Latency-associated peptide (LAP) monomer interacts with TGF-beta-1 in the other monomer. Transforming growth factor beta-1: Homodimer; disulfide-linked. Transforming growth factor beta-1: Interacts with TGF-beta receptors (TGFBR1 and TGFBR2), leading to signal transduction. In terms of processing, transforming growth factor beta-1 proprotein: The precursor proprotein is cleaved in the Golgi apparatus to form Transforming growth factor beta-1 (TGF-beta-1) and Latency-associated peptide (LAP) chains, which remain non-covalently linked, rendering TGF-beta-1 inactive.

The protein localises to the secreted. The protein resides in the extracellular space. Its subcellular location is the extracellular matrix. Its function is as follows. Transforming growth factor beta-1 proprotein: Precursor of the Latency-associated peptide (LAP) and Transforming growth factor beta-1 (TGF-beta-1) chains, which constitute the regulatory and active subunit of TGF-beta-1, respectively. In terms of biological role, required to maintain the Transforming growth factor beta-1 (TGF-beta-1) chain in a latent state during storage in extracellular matrix. Associates non-covalently with TGF-beta-1 and regulates its activation via interaction with 'milieu molecules', such as LTBP1, LRRC32/GARP and LRRC33/NRROS, that control activation of TGF-beta-1. Interaction with integrins (ITGAV:ITGB6 or ITGAV:ITGB8) results in distortion of the Latency-associated peptide chain and subsequent release of the active TGF-beta-1. Transforming growth factor beta-1: Multifunctional protein that regulates the growth and differentiation of various cell types and is involved in various processes, such as normal development, immune function, microglia function and responses to neurodegeneration. Activation into mature form follows different steps: following cleavage of the proprotein in the Golgi apparatus, Latency-associated peptide (LAP) and Transforming growth factor beta-1 (TGF-beta-1) chains remain non-covalently linked rendering TGF-beta-1 inactive during storage in extracellular matrix. At the same time, LAP chain interacts with 'milieu molecules', such as LTBP1, LRRC32/GARP and LRRC33/NRROS that control activation of TGF-beta-1 and maintain it in a latent state during storage in extracellular milieus. TGF-beta-1 is released from LAP by integrins (ITGAV:ITGB6 or ITGAV:ITGB8): integrin-binding to LAP stabilizes an alternative conformation of the LAP bowtie tail and results in distortion of the LAP chain and subsequent release of the active TGF-beta-1. Once activated following release of LAP, TGF-beta-1 acts by binding to TGF-beta receptors (TGFBR1 and TGFBR2), which transduce signal. While expressed by many cells types, TGF-beta-1 only has a very localized range of action within cell environment thanks to fine regulation of its activation by Latency-associated peptide chain (LAP) and 'milieu molecules'. Plays an important role in bone remodeling: acts as a potent stimulator of osteoblastic bone formation. Can promote either T-helper 17 cells (Th17) or regulatory T-cells (Treg) lineage differentiation in a concentration-dependent manner. Can induce epithelial-to-mesenchymal transition (EMT) and cell migration in various cell types. The polypeptide is Transforming growth factor beta-1 proprotein (TGFB1) (Gallus gallus (Chicken)).